A 150-amino-acid polypeptide reads, in one-letter code: Endoribonuclease YbeY (150 aa).

H112, H116, and D122 together coordinate Zn(2+).

This sequence belongs to the endoribonuclease YbeY family. The cofactor is Zn(2+).

The protein resides in the cytoplasm. In terms of biological role, single strand-specific metallo-endoribonuclease involved in late-stage 70S ribosome quality control and in maturation of the 3' terminus of the 16S rRNA. The sequence is that of Endoribonuclease YbeY from Protochlamydia amoebophila (strain UWE25).